The primary structure comprises 432 residues: UDP-N-acetylmuramate--L-alanine ligase (432 aa).

An ATP-binding site is contributed by 109–115 (GAHGKST).

Belongs to the MurCDEF family.

It is found in the cytoplasm. It carries out the reaction UDP-N-acetyl-alpha-D-muramate + L-alanine + ATP = UDP-N-acetyl-alpha-D-muramoyl-L-alanine + ADP + phosphate + H(+). The protein operates within cell wall biogenesis; peptidoglycan biosynthesis. Cell wall formation. This chain is UDP-N-acetylmuramate--L-alanine ligase, found in Campylobacter jejuni subsp. jejuni serotype O:2 (strain ATCC 700819 / NCTC 11168).